Consider the following 506-residue polypeptide: Exopolyphosphatase (506 aa).

Belongs to the GppA/Ppx family. As to quaternary structure, homodimer. Mg(2+) is required as a cofactor.

It is found in the cell membrane. It carries out the reaction [phosphate](n) + H2O = [phosphate](n-1) + phosphate + H(+). The catalysed reaction is [phosphate](n) + ATP = [phosphate](n+1) + ADP. Its activity is regulated as follows. Exopolyphosphatase activity is stimulated by NH(4)(+) and K(+). Phosphotransferase activity is insensitive to the addition of K(+) or NH(4)(+) ions. Functionally, degradation of inorganic polyphosphates (polyP). Releases orthophosphate processively from the ends of the polyP chain. Also has polyphosphate:ADP phosphotransferase activity, catalyzing the production of ATP from ADP and polyP. This Pseudomonas aeruginosa (strain ATCC 15692 / DSM 22644 / CIP 104116 / JCM 14847 / LMG 12228 / 1C / PRS 101 / PAO1) protein is Exopolyphosphatase.